Here is a 676-residue protein sequence, read N- to C-terminus: RNA helicase NPH-II (676 aa).

A Helicase ATP-binding domain is found at 172–347; that stretch reads FLAWISHRPV…IFLPNPAFIH (176 aa). 185–192 is an ATP binding site; sequence GGTGVGKT. A DEXH box motif is present at residues 296 to 299; that stretch reads DEVH. The Helicase C-terminal domain maps to 366 to 535; it reads NPSSRMAYIE…NYILYANKFN (170 aa).

Belongs to the DEAD box helicase family. DEAH subfamily. As to quaternary structure, monomer.

It localises to the virion. The enzyme catalyses ATP + H2O = ADP + phosphate + H(+). Functionally, NTP-dependent helicase that catalyzes unidirectional unwinding of 3'tailed duplex RNAs and plays an important role during transcription of early mRNAs, presumably by preventing R-loop formation behind the elongating RNA polymerase. Might also play a role in the export of newly synthesized mRNA chains out of the core into the cytoplasm. Required for replication and propagation of viral particles. In Monkeypox virus, this protein is RNA helicase NPH-II (OPG084).